We begin with the raw amino-acid sequence, 255 residues long: Imidazole glycerol phosphate synthase subunit HisF (255 aa).

Catalysis depends on residues Asp11 and Asp130.

The protein belongs to the HisA/HisF family. Heterodimer of HisH and HisF.

It is found in the cytoplasm. The catalysed reaction is 5-[(5-phospho-1-deoxy-D-ribulos-1-ylimino)methylamino]-1-(5-phospho-beta-D-ribosyl)imidazole-4-carboxamide + L-glutamine = D-erythro-1-(imidazol-4-yl)glycerol 3-phosphate + 5-amino-1-(5-phospho-beta-D-ribosyl)imidazole-4-carboxamide + L-glutamate + H(+). Its pathway is amino-acid biosynthesis; L-histidine biosynthesis; L-histidine from 5-phospho-alpha-D-ribose 1-diphosphate: step 5/9. In terms of biological role, IGPS catalyzes the conversion of PRFAR and glutamine to IGP, AICAR and glutamate. The HisF subunit catalyzes the cyclization activity that produces IGP and AICAR from PRFAR using the ammonia provided by the HisH subunit. The polypeptide is Imidazole glycerol phosphate synthase subunit HisF (Rhodopseudomonas palustris (strain BisB5)).